The chain runs to 517 residues: ATP synthase subunit alpha (517 aa).

175–182 (GDRQTGKT) lines the ATP pocket.

Belongs to the ATPase alpha/beta chains family. As to quaternary structure, F-type ATPases have 2 components, CF(1) - the catalytic core - and CF(0) - the membrane proton channel. CF(1) has five subunits: alpha(3), beta(3), gamma(1), delta(1), epsilon(1). CF(0) has three main subunits: a(1), b(2) and c(9-12). The alpha and beta chains form an alternating ring which encloses part of the gamma chain. CF(1) is attached to CF(0) by a central stalk formed by the gamma and epsilon chains, while a peripheral stalk is formed by the delta and b chains.

The protein resides in the cell membrane. It catalyses the reaction ATP + H2O + 4 H(+)(in) = ADP + phosphate + 5 H(+)(out). Produces ATP from ADP in the presence of a proton gradient across the membrane. The alpha chain is a regulatory subunit. This chain is ATP synthase subunit alpha, found in Herpetosiphon aurantiacus (strain ATCC 23779 / DSM 785 / 114-95).